Reading from the N-terminus, the 157-residue chain is Small ribosomal subunit protein uS7 (157 aa).

This sequence belongs to the universal ribosomal protein uS7 family. In terms of assembly, part of the 30S ribosomal subunit. Contacts proteins S9 and S11.

Its function is as follows. One of the primary rRNA binding proteins, it binds directly to 16S rRNA where it nucleates assembly of the head domain of the 30S subunit. Is located at the subunit interface close to the decoding center, probably blocks exit of the E-site tRNA. This is Small ribosomal subunit protein uS7 from Chlamydia caviae (strain ATCC VR-813 / DSM 19441 / 03DC25 / GPIC) (Chlamydophila caviae).